The following is a 450-amino-acid chain: Tubulin alpha-6 chain (450 aa).

The GTP site is built by Q11, E71, G144, T145, T179, N206, and N228. E71 provides a ligand contact to Mg(2+). Residue E254 is part of the active site. The residue at position 349 (T349) is a Phosphothreonine. A disordered region spans residues 430–450; the sequence is KDYEEVGAEGGDDEDDEGEEY. Residues 431–450 are compositionally biased toward acidic residues; it reads DYEEVGAEGGDDEDDEGEEY.

This sequence belongs to the tubulin family. Dimer of alpha and beta chains. A typical microtubule is a hollow water-filled tube with an outer diameter of 25 nm and an inner diameter of 15 nM. Alpha-beta heterodimers associate head-to-tail to form protofilaments running lengthwise along the microtubule wall with the beta-tubulin subunit facing the microtubule plus end conferring a structural polarity. Microtubules usually have 13 protofilaments but different protofilament numbers can be found in some organisms and specialized cells. Interacts with TFCB. It depends on Mg(2+) as a cofactor. Undergoes a tyrosination/detyrosination cycle, the cyclic removal and re-addition of a C-terminal tyrosine residue by the enzymes tubulin tyrosine carboxypeptidase (TTCP) and tubulin tyrosine ligase (TTL), respectively. Post-translationally, acetylation of alpha chains at Lys-40 stabilizes microtubules and affects affinity and processivity of microtubule motors. This modification has a role in multiple cellular functions, ranging from cell motility, cell cycle progression or cell differentiation to intracellular trafficking and signaling.

It localises to the cytoplasm. Its subcellular location is the cytoskeleton. It catalyses the reaction GTP + H2O = GDP + phosphate + H(+). Its function is as follows. Tubulin is the major constituent of microtubules, a cylinder consisting of laterally associated linear protofilaments composed of alpha- and beta-tubulin heterodimers. Microtubules grow by the addition of GTP-tubulin dimers to the microtubule end, where a stabilizing cap forms. Below the cap, tubulin dimers are in GDP-bound state, owing to GTPase activity of alpha-tubulin. The protein is Tubulin alpha-6 chain (TUBA6) of Arabidopsis thaliana (Mouse-ear cress).